The following is a 285-amino-acid chain: Putative lipoprotein SCO4650 (285 aa).

The N-terminal stretch at 1 to 20 (MTGTTARRTVVSVAVSAALA) is a signal peptide. Cys-21 carries N-palmitoyl cysteine lipidation. Residue Cys-21 is the site of S-diacylglycerol cysteine attachment. Residues 27–63 (GPGGSDDAGHSTGPTGSARPSASAPASSRAPALTGPS) form a disordered region. Over residues 43–58 (SARPSASAPASSRAPA) the composition is skewed to low complexity.

It is found in the cell membrane. This is Putative lipoprotein SCO4650 from Streptomyces coelicolor (strain ATCC BAA-471 / A3(2) / M145).